The primary structure comprises 58 residues: Small ribosomal subunit protein bS21 (58 aa).

The protein belongs to the bacterial ribosomal protein bS21 family.

In Staphylococcus saprophyticus subsp. saprophyticus (strain ATCC 15305 / DSM 20229 / NCIMB 8711 / NCTC 7292 / S-41), this protein is Small ribosomal subunit protein bS21.